The chain runs to 178 residues: Bifunctional protein PyrR (178 aa).

Substrate contacts are provided by residues 41–42 (RR), 103–111 (DDVLYTGRT), and Arg-136. The short motif at 99–111 (VILVDDVLYTGRT) is the PRPP-binding element.

The protein belongs to the purine/pyrimidine phosphoribosyltransferase family. PyrR subfamily. As to quaternary structure, homodimer and homohexamer; in equilibrium.

The catalysed reaction is UMP + diphosphate = 5-phospho-alpha-D-ribose 1-diphosphate + uracil. Its function is as follows. Regulates transcriptional attenuation of the pyrimidine nucleotide (pyr) operon by binding in a uridine-dependent manner to specific sites on pyr mRNA. This disrupts an antiterminator hairpin in the RNA and favors formation of a downstream transcription terminator, leading to a reduced expression of downstream genes. In terms of biological role, also displays a weak uracil phosphoribosyltransferase activity which is not physiologically significant. The sequence is that of Bifunctional protein PyrR from Clostridium acetobutylicum (strain ATCC 824 / DSM 792 / JCM 1419 / IAM 19013 / LMG 5710 / NBRC 13948 / NRRL B-527 / VKM B-1787 / 2291 / W).